The chain runs to 765 residues: Protein O-mannosyl-transferase 2 (765 aa).

The tract at residues 1 to 31 (MAASVVKTPKCPRRGSVKDVAQNAPRTAPTS) is disordered. Residues 35 to 55 (ANWNWWLLLATVFLVTFATRF) form a helical membrane-spanning segment. N-linked (GlcNAc...) asparagine glycans are attached at residues N80, N106, and N119. 5 consecutive transmembrane segments (helical) span residues 128–148 (YFCTTLGALIMPMGFDTVYDL), 175–195 (ILLDPILLFFMMASVWGMVKV), 206–226 (GLRWWLWLFLTGTMLSCTISV), 228–248 (FVGLFVVLLVGLHTATELWLI), and 268–288 (ITLIVWPVLLYILFFYIHLSV). Residues N290 and N314 are each glycosylated (N-linked (GlcNAc...) asparagine). MIR domains lie at 318–374 (PRDV…IRPH), 384–440 (VQIL…VLIV), and 445–501 (NETV…VEDN). N445 carries N-linked (GlcNAc...) asparagine glycosylation. 4 consecutive transmembrane segments (helical) span residues 566–586 (IYLLGNPLIWWSNLVFLALFV), 667–687 (LFLGWMLHYLPFWAMGRVLYF), 689–709 (HYFPALIFNSLLTGVMYNYIL), and 719–739 (VILGLVLSILVYSFAAFSPLA). N751 carries an N-linked (GlcNAc...) asparagine glycan.

The protein belongs to the glycosyltransferase 39 family. As to quaternary structure, interacts with Rt/POMT1. In terms of tissue distribution, at the cellular blastoderm stage, expression accumulates in the ventrally located mesoderm primordium. At germ band extension, mesoderm expression is seen as stripes of strong expression. A very strong signal is also detected in the invaginating gut. As the germ band retracts, mesodermal expression decays and becomes restricted to somatic muscle precursors.

It localises to the endoplasmic reticulum membrane. The enzyme catalyses a di-trans,poly-cis-dolichyl beta-D-mannosyl phosphate + L-seryl-[protein] = 3-O-(alpha-D-mannosyl)-L-seryl-[protein] + a di-trans,poly-cis-dolichyl phosphate + H(+). It carries out the reaction a di-trans,poly-cis-dolichyl beta-D-mannosyl phosphate + L-threonyl-[protein] = 3-O-(alpha-D-mannosyl)-L-threonyl-[protein] + a di-trans,poly-cis-dolichyl phosphate + H(+). The protein operates within protein modification; protein glycosylation. Rt/POMT1 and tw/POMT2 function as a protein O-mannosyltransferase in association with each other to generate and maintain normal muscle development. The chain is Protein O-mannosyl-transferase 2 (tw) from Drosophila melanogaster (Fruit fly).